Here is a 280-residue protein sequence, read N- to C-terminus: Probable endonuclease 4 (280 aa).

Residues H69, H109, E145, D179, H182, H216, D229, H231, and E261 each coordinate Zn(2+).

Belongs to the AP endonuclease 2 family. Zn(2+) serves as cofactor.

The enzyme catalyses Endonucleolytic cleavage to 5'-phosphooligonucleotide end-products.. Functionally, endonuclease IV plays a role in DNA repair. It cleaves phosphodiester bonds at apurinic or apyrimidinic (AP) sites, generating a 3'-hydroxyl group and a 5'-terminal sugar phosphate. This is Probable endonuclease 4 from Aliarcobacter butzleri (strain RM4018) (Arcobacter butzleri).